We begin with the raw amino-acid sequence, 169 residues long: Succinate dehydrogenase cytochrome b560 subunit, mitochondrial (169 aa).

The transit peptide at 1 to 29 (MAALLLRHVGRHCLRAHLSPQLCIRNAVP) directs the protein to the mitochondrion. The Mitochondrial matrix portion of the chain corresponds to 30-62 (LGTTAKEEMERFWNKNLGSNRPLSPHITIYRWS). A helical transmembrane segment spans residues 63–92 (LPMAMSICHRGTGIALSAGVSLFGLSALLL). At 93 to 112 (PGNFESHLELVKSLCLGPTL) the chain is on the mitochondrial intermembrane side. A helical transmembrane segment spans residues 113-137 (IYTAKFGIVFPLMYHTWNGIRHLIW). His127 serves as a coordination point for heme b. At 138 to 144 (DLGKGLT) the chain is on the mitochondrial matrix side. Residues 145–166 (IPQLTQSGVVVLILTVLSSVGL) traverse the membrane as a helical segment. Topologically, residues 167–169 (AAM) are mitochondrial intermembrane.

Belongs to the cytochrome b560 family. In terms of assembly, component of complex II composed of four subunits: the flavoprotein (FP) SDHA, iron-sulfur protein (IP) SDHB, and a cytochrome b560 composed of SDHC and SDHD. Heme b is required as a cofactor. In terms of tissue distribution, detected in heart muscle (at protein level).

The protein resides in the mitochondrion inner membrane. The protein operates within carbohydrate metabolism; tricarboxylic acid cycle. In terms of biological role, membrane-anchoring subunit of succinate dehydrogenase (SDH) that is involved in complex II of the mitochondrial electron transport chain and is responsible for transferring electrons from succinate to ubiquinone (coenzyme Q). SDH also oxidizes malate to the non-canonical enol form of oxaloacetate, enol-oxaloacetate. Enol-oxaloacetate, which is a potent inhibitor of the succinate dehydrogenase activity, is further isomerized into keto-oxaloacetate. In Sus scrofa (Pig), this protein is Succinate dehydrogenase cytochrome b560 subunit, mitochondrial (SDHC).